Consider the following 509-residue polypeptide: MTTTKDNSGLAALFANSSGPRQKPQRAGKVDPVRDQQEDKMEVEDEEEDEEEDEEDEEEDEEDEEDEEEKEEDDDDDDDEEEIEEPVIKKSKKNKKSKEESADLEDQYMAKLAEEVAEEKPMVAETSAEEIKVDEPESDSEDEPELDVDEETKKKLEATNKELDKADYTIFVGNVSSEVITDKTVYNNFKALFAAIGTVASVRFRSISFSKLLPRKVAFISQQFHSKRDTVNAYIVFKNVKSVKGALTLNGSVFKGFHMRVDSVAHPGAQDHKRCVFVGALDFEEQEESLWEAFSSCGDVEYVRIVRDPKTNVGKGFAYVQFKDVNSVEQALLLNGKGINELSKSTTNKRKLRVSRAKSQHSQERAKQADMKNIRNAKTEGLSRDEKSHFGRAQSRLGKAGKAQLQSIVQEGLRAKKEDGKVNLARSKRRGVKPNKNRVEKPGQSRAEKRKAMFGTPTNGAPGAGGKKKRLTTRSQKFKQDGGVKKDGDAKKDGPKKERDGSKKGSKKN.

Residues 1–152 (MTTTKDNSGL…EPELDVDEET (152 aa)) form a disordered region. A compositionally biased stretch (basic and acidic residues) spans 28 to 40 (GKVDPVRDQQEDK). A coiled-coil region spans residues 33-114 (VRDQQEDKME…EDQYMAKLAE (82 aa)). Residues 41-85 (MEVEDEEEDEEEDEEDEEEDEEDEEDEEEKEEDDDDDDDEEEIEE) are compositionally biased toward acidic residues. Residues 112–122 (LAEEVAEEKPM) show a composition bias toward basic and acidic residues. The span at 136 to 150 (PESDSEDEPELDVDE) shows a compositional bias: acidic residues. 2 consecutive RRM domains span residues 168 to 266 (YTIF…SVAH) and 274 to 359 (RCVF…RAKS). 2 disordered regions span residues 345-403 (STTN…AGKA) and 419-509 (DGKV…SKKN). Residues 347-359 (TNKRKLRVSRAKS) show a composition bias toward basic residues. Over residues 361–389 (HSQERAKQADMKNIRNAKTEGLSRDEKSH) the composition is skewed to basic and acidic residues. A compositionally biased stretch (basic residues) spans 426-436 (RSKRRGVKPNK). Basic and acidic residues-rich tracts occupy residues 437–451 (NRVE…EKRK) and 478–503 (FKQD…DGSK).

This sequence belongs to the RRM RBM34 family.

Its subcellular location is the nucleus. The protein localises to the nucleolus. Involved in pre-25S rRNA processing. The chain is Nucleolar protein 12 (NOP12) from Yarrowia lipolytica (strain CLIB 122 / E 150) (Yeast).